A 148-amino-acid polypeptide reads, in one-letter code: Ribonuclease pancreatic (148 aa).

An N-terminal signal peptide occupies residues 1–25 (MGLEKSLLLLPLLVLVLGCVQPSLG). 2 residues coordinate substrate: K32 and R35. H37 (proton acceptor) is an active-site residue. Disulfide bonds link C50–C108, C64–C119, C82–C134, and C89–C96. Substrate-binding positions include 65–69 (KPVNT) and K90. H143 (proton donor) is an active-site residue.

Belongs to the pancreatic ribonuclease family. As to quaternary structure, monomer. Interacts with and forms tight 1:1 complexes with RNH1. Dimerization of two such complexes may occur. Interaction with RNH1 inhibits this protein. In terms of tissue distribution, pancreas.

The protein resides in the secreted. The catalysed reaction is an [RNA] containing cytidine + H2O = an [RNA]-3'-cytidine-3'-phosphate + a 5'-hydroxy-ribonucleotide-3'-[RNA].. It carries out the reaction an [RNA] containing uridine + H2O = an [RNA]-3'-uridine-3'-phosphate + a 5'-hydroxy-ribonucleotide-3'-[RNA].. Functionally, endonuclease that catalyzes the cleavage of RNA on the 3' side of pyrimidine nucleotides. Acts on single-stranded and double-stranded RNA. In Gerbillus nigeriae (Nigerian gerbil), this protein is Ribonuclease pancreatic (RNASE1).